Consider the following 228-residue polypeptide: Cytidylate kinase (228 aa).

17 to 25 is a binding site for ATP; that stretch reads GPTASGKGT.

This sequence belongs to the cytidylate kinase family. Type 1 subfamily.

Its subcellular location is the cytoplasm. It catalyses the reaction CMP + ATP = CDP + ADP. It carries out the reaction dCMP + ATP = dCDP + ADP. The polypeptide is Cytidylate kinase (Burkholderia pseudomallei (strain 1106a)).